The following is a 289-amino-acid chain: Syntaxin-3 (289 aa).

Residues 1 to 263 lie on the Cytoplasmic side of the membrane; the sequence is MKDRLEQLKA…VKYQSQARKK (263 aa). Positions 32 to 111 form a coiled coil; that stretch reads MDEFFSEIEE…IEEDEVRSSA (80 aa). The t-SNARE coiled-coil homology domain occupies 191–253; sequence LSEIEGRHKD…EKARDETKKA (63 aa). A helical; Anchor for type IV membrane protein transmembrane segment spans residues 264–284; it reads LIIIIVLVVVLLGILALIIGL. At 285 to 289 the chain is on the extracellular side; it reads SVGLN.

Belongs to the syntaxin family. Interacts with REEP6. Interacts with PRPH2 in rod and cone photoreceptors. Interacts with ROM1. Interacts with SNAP25. Interacts with VAMP2. In terms of assembly, interacts with IPO5. Expressed in small intestine, kidney, pancreas, placenta as well as in retina. Weaker expression in lung, liver and heart. Not expressed in brain and skeletal muscle. As to expression, expressed only in the retina. In terms of tissue distribution, ubiquitously expressed.

The protein resides in the apical cell membrane. The protein localises to the nucleus. In terms of biological role, potentially involved in docking of synaptic vesicles at presynaptic active zones. Apical receptor involved in membrane fusion of apical vesicles. Functionally, essential for survival of retinal photoreceetors. Its function is as follows. Functions as a regulator of gene expression. The chain is Syntaxin-3 (STX3) from Homo sapiens (Human).